The primary structure comprises 350 residues: Small ribosomal subunit biogenesis GTPase RsgA (350 aa).

The span at 1–17 shows a compositional bias: polar residues; sequence MSKNKLSKGQQRRVNAN. Residues 1 to 33 are disordered; it reads MSKNKLSKGQQRRVNANHQRRLKTSKEKPDYDD. The CP-type G domain maps to 104–273; sequence TSVLTRPDFY…VIDSPGVREF (170 aa). GTP is bound by residues 160 to 163 and 214 to 222; these read NKID and GQSGVGKSS. Residues Cys-297, Cys-302, His-304, and Cys-310 each contribute to the Zn(2+) site.

It belongs to the TRAFAC class YlqF/YawG GTPase family. RsgA subfamily. As to quaternary structure, monomer. Associates with 30S ribosomal subunit, binds 16S rRNA. It depends on Zn(2+) as a cofactor.

The protein localises to the cytoplasm. Functionally, one of several proteins that assist in the late maturation steps of the functional core of the 30S ribosomal subunit. Helps release RbfA from mature subunits. May play a role in the assembly of ribosomal proteins into the subunit. Circularly permuted GTPase that catalyzes slow GTP hydrolysis, GTPase activity is stimulated by the 30S ribosomal subunit. In Escherichia coli (strain ATCC 8739 / DSM 1576 / NBRC 3972 / NCIMB 8545 / WDCM 00012 / Crooks), this protein is Small ribosomal subunit biogenesis GTPase RsgA.